We begin with the raw amino-acid sequence, 512 residues long: Rab11 family-interacting protein 2 (512 aa).

The region spanning 1–120 (MMLSEQAQKW…DKQRRKTEWF (120 aa)) is the C2 domain. A necessary for its cellular translocation to the plasma membrane region spans residues 15–102 (VQVTVLQAKD…GLDKFLGQVA (88 aa)). Disordered stretches follow at residues 169–239 (DKMK…MSSE) and 262–285 (VPES…KMNQ). Over residues 178 to 188 (GTFSDTSSAII) the composition is skewed to polar residues. The segment covering 226–236 (HSMSDLSGSHM) has biased composition (low complexity). At Ser-227 the chain carries Phosphoserine; by MARK2. The residue at position 277 (Ser-277) is a Phosphoserine. An NPF 1 motif is present at residues 323 to 325 (NPF). Basic and acidic residues predominate over residues 361-374 (ERVTGKKDSRRSDK). A disordered region spans residues 361–392 (ERVTGKKDSRRSDKLNNGGSDSPCDLKSPNAF). Short sequence motifs (NPF) lie at residues 406–408 (NPF) and 440–442 (NPF). Residues 437–499 (PDSNPFDATA…EETPSILRVP (63 aa)) form the FIP-RBD domain. The tract at residues 465 to 512 (ELLRRKDTHIRELEDYIDNLLVRVMEETPSILRVPYEPSRKAGKFSNS) is necessary for interaction with AP2A1, RAB11A, subcellular location, endocytosis activity and homooligomerization.

As to quaternary structure, homooligomerizes in a Rab11-independent manner. Forms a heterooligomeric complex with RAB11FIP4. Interacts with AP2A1, MYO5B, RAB25 and REPS1. Interacts with RAB11A and RAB11B (activated GTP-bound form). Interacts with NPC1L1. Interacts (via NPF motifs) with EHD1 and EHD3. Interacts with TICAM2; this interaction directs RAB11FIP2 to the phagosome. Interacts with RAB14 and RAB25 (GTP-bound forms). In terms of processing, phosphorylation at Ser-227 by MARK2 regulates epithelial cell polarity.

The protein localises to the cell projection. The protein resides in the phagocytic cup. Its subcellular location is the cell membrane. It localises to the recycling endosome membrane. Its function is as follows. A Rab11 effector binding preferentially phosphatidylinositol 3,4,5-trisphosphate (PtdInsP3) and phosphatidic acid (PA) and acting in the regulation of the transport of vesicles from the endosomal recycling compartment (ERC) to the plasma membrane. Involved in insulin granule exocytosis. Also involved in receptor-mediated endocytosis and membrane trafficking of recycling endosomes, probably originating from clathrin-coated vesicles. Required in a complex with MYO5B and RAB11 for the transport of NPC1L1 to the plasma membrane. Also acts as a regulator of cell polarity. Plays an essential role in phagocytosis through a mechanism involving TICAM2, RAC1 and CDC42 Rho GTPases for controlling actin-dynamics. The polypeptide is Rab11 family-interacting protein 2 (RAB11FIP2) (Homo sapiens (Human)).